We begin with the raw amino-acid sequence, 152 residues long: Endoribonuclease YbeY (152 aa).

Residues His-113, His-117, and His-123 each contribute to the Zn(2+) site.

This sequence belongs to the endoribonuclease YbeY family. Zn(2+) serves as cofactor.

Its subcellular location is the cytoplasm. In terms of biological role, single strand-specific metallo-endoribonuclease involved in late-stage 70S ribosome quality control and in maturation of the 3' terminus of the 16S rRNA. This Acidovorax sp. (strain JS42) protein is Endoribonuclease YbeY.